A 363-amino-acid chain; its full sequence is NAD(P)H-quinone oxidoreductase subunit 1, chloroplastic (363 aa).

7 helical membrane-spanning segments follow: residues 28–48 (WVLA…LVIV), 98–118 (FSIG…VIPF), 129–149 (IGIF…LMSG), 253–273 (FGLF…FVTV), 274–294 (LYLG…LVEI), 300–320 (IFGT…FLFI), and 336–356 (LLNL…LLTT).

This sequence belongs to the complex I subunit 1 family. In terms of assembly, NDH is composed of at least 16 different subunits, 5 of which are encoded in the nucleus.

It localises to the plastid. The protein localises to the chloroplast thylakoid membrane. The enzyme catalyses a plastoquinone + NADH + (n+1) H(+)(in) = a plastoquinol + NAD(+) + n H(+)(out). It carries out the reaction a plastoquinone + NADPH + (n+1) H(+)(in) = a plastoquinol + NADP(+) + n H(+)(out). Functionally, NDH shuttles electrons from NAD(P)H:plastoquinone, via FMN and iron-sulfur (Fe-S) centers, to quinones in the photosynthetic chain and possibly in a chloroplast respiratory chain. The immediate electron acceptor for the enzyme in this species is believed to be plastoquinone. Couples the redox reaction to proton translocation, and thus conserves the redox energy in a proton gradient. In Citrus sinensis (Sweet orange), this protein is NAD(P)H-quinone oxidoreductase subunit 1, chloroplastic.